The primary structure comprises 1483 residues: Ubiquitin fusion degradation protein 4 (1483 aa).

The segment at 1 to 117 (MSENNSHNLD…NNEFGSNPLH (117 aa)) is disordered. The segment covering 8–18 (NLDEHESHSEN) has biased composition (basic and acidic residues). Residues 61–70 (EADDGEDDDN) show a composition bias toward acidic residues. Threonine 87 carries the phosphothreonine modification. Lysine 349 participates in a covalent cross-link: Glycyl lysine isopeptide (Lys-Gly) (interchain with G-Cter in ubiquitin). The segment at 1007–1081 (CGVKSDSFIN…LIQLWKNKSK (75 aa)) is K-box. The region spanning 1376–1483 (AEHGYTMDSS…EEGAGAFLLS (108 aa)) is the HECT domain. Cysteine 1450 (glycyl thioester intermediate) is an active-site residue.

It belongs to the UPL family. K-HECT subfamily.

The enzyme catalyses S-ubiquitinyl-[E2 ubiquitin-conjugating enzyme]-L-cysteine + [acceptor protein]-L-lysine = [E2 ubiquitin-conjugating enzyme]-L-cysteine + N(6)-ubiquitinyl-[acceptor protein]-L-lysine.. Functionally, E3 ubiquitin-protein ligase which accepts ubiquitin from an E2 ubiquitin-conjugating enzyme in the form of a thioester and then directly transfers the ubiquitin to targeted substrates. This Saccharomyces cerevisiae (strain ATCC 204508 / S288c) (Baker's yeast) protein is Ubiquitin fusion degradation protein 4 (UFD4).